The chain runs to 385 residues: UPF0284 protein PMT9312_0438 (385 aa).

It belongs to the UPF0284 family.

The sequence is that of UPF0284 protein PMT9312_0438 from Prochlorococcus marinus (strain MIT 9312).